Reading from the N-terminus, the 457-residue chain is tRNA-2-methylthio-N(6)-dimethylallyladenosine synthase (457 aa).

The MTTase N-terminal domain occupies 4-119 (RNFHIITFGC…APDAIERLYA (116 aa)). [4Fe-4S] cluster is bound by residues C13, C48, C82, C164, C168, and C171. One can recognise a Radical SAM core domain in the interval 150 to 385 (NTLALMAYVN…QATQLEHSTS (236 aa)). Residues 388-456 (KSRVGVETTV…KHSLVAEPLI (69 aa)) form the TRAM domain.

Belongs to the methylthiotransferase family. MiaB subfamily. In terms of assembly, monomer. [4Fe-4S] cluster serves as cofactor.

The protein localises to the cytoplasm. It catalyses the reaction N(6)-dimethylallyladenosine(37) in tRNA + (sulfur carrier)-SH + AH2 + 2 S-adenosyl-L-methionine = 2-methylsulfanyl-N(6)-dimethylallyladenosine(37) in tRNA + (sulfur carrier)-H + 5'-deoxyadenosine + L-methionine + A + S-adenosyl-L-homocysteine + 2 H(+). Catalyzes the methylthiolation of N6-(dimethylallyl)adenosine (i(6)A), leading to the formation of 2-methylthio-N6-(dimethylallyl)adenosine (ms(2)i(6)A) at position 37 in tRNAs that read codons beginning with uridine. The sequence is that of tRNA-2-methylthio-N(6)-dimethylallyladenosine synthase from Lawsonia intracellularis (strain PHE/MN1-00).